Reading from the N-terminus, the 218-residue chain is MGQKINPLGFRLGVTQNHHSYWFAQPKNYSKLLQEDQKMRNCIENYVYKNIRNSSNYGGIARIEIKRKTDLIQVEIHTGFPALLVENRKRGIEQLKTDVQSILTSGDRKLRMTLTEVTKPYGEPNILAEYIALQLESRVAFRRTMKKAIELAKKTNIKGIKIQIAGRLNGAEIARVEWAREGRVPLQTLRAKIDYCYYPAQTIYGVLGIKIWIFQDEK.

In terms of domain architecture, KH type-2 spans 47-118 (VYKNIRNSSN…KLRMTLTEVT (72 aa)).

This sequence belongs to the universal ribosomal protein uS3 family. In terms of assembly, part of the 30S ribosomal subunit.

It localises to the plastid. Its subcellular location is the chloroplast. This is Small ribosomal subunit protein uS3c (rps3) from Physcomitrium patens (Spreading-leaved earth moss).